We begin with the raw amino-acid sequence, 312 residues long: UPF0725 protein At3g19520 (312 aa).

The protein belongs to the UPF0725 (EMB2204) family.

This is UPF0725 protein At3g19520 from Arabidopsis thaliana (Mouse-ear cress).